The chain runs to 220 residues: Protein GrpE (220 aa).

Residues 1–55 (MCGGDVQGQGVASGCDEALERADSLRASDPVPVESGEGSVPGEHSQELETGASEE) form a disordered region.

It belongs to the GrpE family. As to quaternary structure, homodimer.

Its subcellular location is the cytoplasm. Its function is as follows. Participates actively in the response to hyperosmotic and heat shock by preventing the aggregation of stress-denatured proteins, in association with DnaK and GrpE. It is the nucleotide exchange factor for DnaK and may function as a thermosensor. Unfolded proteins bind initially to DnaJ; upon interaction with the DnaJ-bound protein, DnaK hydrolyzes its bound ATP, resulting in the formation of a stable complex. GrpE releases ADP from DnaK; ATP binding to DnaK triggers the release of the substrate protein, thus completing the reaction cycle. Several rounds of ATP-dependent interactions between DnaJ, DnaK and GrpE are required for fully efficient folding. The protein is Protein GrpE of Treponema pallidum (strain Nichols).